The sequence spans 1368 residues: Mediator of RNA polymerase II transcription subunit 23 (1368 aa).

Positions 1343 to 1368 are disordered; that stretch reads VPPQAMNSGSPAPQSNQVPVSLPVTQ. The segment covering 1347 to 1368 has biased composition (polar residues); sequence AMNSGSPAPQSNQVPVSLPVTQ.

It belongs to the Mediator complex subunit 23 family. Interacts with ELK1. Component of the Mediator complex, which is composed of MED1, MED4, MED6, MED7, MED8, MED9, MED10, MED11, MED12, MED13, MED13L, MED14, MED15, MED16, MED17, MED18, MED19, MED20, MED21, MED22, MED23, MED24, MED25, MED26, MED27, MED29, MED30, MED31, CCNC, CDK8 and CDC2L6/CDK11. The MED12, MED13, CCNC and CDK8 subunits form a distinct module termed the CDK8 module. Mediator containing the CDK8 module is less active than Mediator lacking this module in supporting transcriptional activation. Individual preparations of the Mediator complex lacking one or more distinct subunits have been variously termed ARC, CRSP, DRIP, PC2, SMCC and TRAP. Interacts with CEBPB (when not methylated), CTNNB1, and GLI3. Interacts with the adenovirus E1A protein.

It localises to the nucleus. Functionally, required for transcriptional activation subsequent to the assembly of the pre-initiation complex. Component of the Mediator complex, a coactivator involved in the regulated transcription of nearly all RNA polymerase II-dependent genes. Mediator functions as a bridge to convey information from gene-specific regulatory proteins to the basal RNA polymerase II transcription machinery. Mediator is recruited to promoters by direct interactions with regulatory proteins and serves as a scaffold for the assembly of a functional pre-initiation complex with RNA polymerase II and the general transcription factors. Required for transcriptional activation by adenovirus E1A protein. Required for ELK1-dependent transcriptional activation in response to activated Ras signaling. The chain is Mediator of RNA polymerase II transcription subunit 23 (MED23) from Homo sapiens (Human).